We begin with the raw amino-acid sequence, 812 residues long: Lon protease (812 aa).

In terms of domain architecture, Lon N-terminal spans 22–215 (YAVLPLRDIV…KALSFMEAEI (194 aa)). 367-374 (GPPGVGKT) contributes to the ATP binding site. The Lon proteolytic domain occupies 602 to 783 (EDQVGVVTGL…GEVLKHTLVR (182 aa)). Active-site residues include Ser-689 and Lys-732. The segment at 787-812 (PIEWTEQENPTAVPPVEDEAGASLAH) is disordered.

The protein belongs to the peptidase S16 family. Homohexamer. Organized in a ring with a central cavity.

The protein resides in the cytoplasm. It catalyses the reaction Hydrolysis of proteins in presence of ATP.. Functionally, ATP-dependent serine protease that mediates the selective degradation of mutant and abnormal proteins as well as certain short-lived regulatory proteins. Required for cellular homeostasis and for survival from DNA damage and developmental changes induced by stress. Degrades polypeptides processively to yield small peptide fragments that are 5 to 10 amino acids long. Binds to DNA in a double-stranded, site-specific manner. This chain is Lon protease, found in Brucella suis biovar 1 (strain 1330).